Reading from the N-terminus, the 103-residue chain is c-Myc-binding protein (103 aa).

Belongs to the AMY1 family. As to quaternary structure, binds via its C-terminal region to the N-terminal region of MYC. Associates with AKAP1/S-AKAP84. Interacts with MYCBPAP. Interacts with CFAP91.

Its subcellular location is the cytoplasm. The protein resides in the nucleus. In terms of biological role, may control the transcriptional activity of MYC. Stimulates the activation of E box-dependent transcription by MYC. The sequence is that of c-Myc-binding protein (MYCBP) from Pongo abelii (Sumatran orangutan).